A 103-amino-acid chain; its full sequence is Large ribosomal subunit protein uL24 (103 aa).

It belongs to the universal ribosomal protein uL24 family. In terms of assembly, part of the 50S ribosomal subunit.

Functionally, one of two assembly initiator proteins, it binds directly to the 5'-end of the 23S rRNA, where it nucleates assembly of the 50S subunit. Its function is as follows. One of the proteins that surrounds the polypeptide exit tunnel on the outside of the subunit. This is Large ribosomal subunit protein uL24 from Ruthia magnifica subsp. Calyptogena magnifica.